The sequence spans 450 residues: ATP-dependent protease ATPase subunit HslU (450 aa).

ATP contacts are provided by residues Val-27, 69 to 74 (GVGKTE), Asp-263, Glu-328, and Arg-400.

It belongs to the ClpX chaperone family. HslU subfamily. In terms of assembly, a double ring-shaped homohexamer of HslV is capped on each side by a ring-shaped HslU homohexamer. The assembly of the HslU/HslV complex is dependent on binding of ATP.

The protein resides in the cytoplasm. In terms of biological role, ATPase subunit of a proteasome-like degradation complex; this subunit has chaperone activity. The binding of ATP and its subsequent hydrolysis by HslU are essential for unfolding of protein substrates subsequently hydrolyzed by HslV. HslU recognizes the N-terminal part of its protein substrates and unfolds these before they are guided to HslV for hydrolysis. This is ATP-dependent protease ATPase subunit HslU from Aquifex aeolicus (strain VF5).